A 288-amino-acid polypeptide reads, in one-letter code: MNNIIDGKALANEILADLKLEIQELTSHTNASPKLAIVLVGDNPASIIYVRNKIKNAHKIGIYTVLINLSATIHTNDLISKINELNLDNEISGIIVQLPLPSSIDKNKILSAVSPSKDIDGFHPLNVGYLHSGISQGFIPCTALGCLAAIKKYEPNLTGKNVVIIGRSNIVGKPLSALLLKENCSVTICHSKTHNLRSITSKADIVVAAIGSPLKLTAEYFNPESIVIDVGINRISSNKIIGDVDFENVQSKVQYITPIPGGIGPMTIAFLLKNTVKAFKDSLYTLDT.

NADP(+)-binding positions include 166 to 168 (GRS), Ser191, and Ile232.

This sequence belongs to the tetrahydrofolate dehydrogenase/cyclohydrolase family. In terms of assembly, homodimer.

The enzyme catalyses (6R)-5,10-methylene-5,6,7,8-tetrahydrofolate + NADP(+) = (6R)-5,10-methenyltetrahydrofolate + NADPH. The catalysed reaction is (6R)-5,10-methenyltetrahydrofolate + H2O = (6R)-10-formyltetrahydrofolate + H(+). It functions in the pathway one-carbon metabolism; tetrahydrofolate interconversion. Functionally, catalyzes the oxidation of 5,10-methylenetetrahydrofolate to 5,10-methenyltetrahydrofolate and then the hydrolysis of 5,10-methenyltetrahydrofolate to 10-formyltetrahydrofolate. This is Bifunctional protein FolD from Rickettsia peacockii (strain Rustic).